The chain runs to 882 residues: Valine--tRNA ligase (882 aa).

Residues 45–55 carry the 'HIGH' region motif; that stretch reads PNVTGSLHIGH. The short motif at 525 to 529 is the 'KMSKS' region element; the sequence is KFSKS. ATP is bound at residue lysine 528. Residues 812–881 adopt a coiled-coil conformation; that stretch reads EGLIDVAKEK…VLKKGIQNLA (70 aa).

This sequence belongs to the class-I aminoacyl-tRNA synthetase family. ValS type 1 subfamily. As to quaternary structure, monomer.

It localises to the cytoplasm. It catalyses the reaction tRNA(Val) + L-valine + ATP = L-valyl-tRNA(Val) + AMP + diphosphate. Functionally, catalyzes the attachment of valine to tRNA(Val). As ValRS can inadvertently accommodate and process structurally similar amino acids such as threonine, to avoid such errors, it has a 'posttransfer' editing activity that hydrolyzes mischarged Thr-tRNA(Val) in a tRNA-dependent manner. In Leptospira interrogans serogroup Icterohaemorrhagiae serovar Lai (strain 56601), this protein is Valine--tRNA ligase.